Consider the following 377-residue polypeptide: tRNA pseudouridine synthase Pus10 (377 aa).

Asp-206 (nucleophile) is an active-site residue. Residues Tyr-270 and Tyr-339 each contribute to the substrate site.

Belongs to the pseudouridine synthase Pus10 family.

The enzyme catalyses uridine(54) in tRNA = pseudouridine(54) in tRNA. It carries out the reaction uridine(55) in tRNA = pseudouridine(55) in tRNA. In terms of biological role, responsible for synthesis of pseudouridine from uracil-54 and uracil-55 in the psi GC loop of transfer RNAs. In Picrophilus torridus (strain ATCC 700027 / DSM 9790 / JCM 10055 / NBRC 100828 / KAW 2/3), this protein is tRNA pseudouridine synthase Pus10.